Reading from the N-terminus, the 274-residue chain is Large ribosomal subunit protein uL2cz/uL2cy (274 aa).

Disordered stretches follow at residues methionine 1–valine 22 and proline 225–alanine 252.

This sequence belongs to the universal ribosomal protein uL2 family. Part of the 50S ribosomal subunit.

It localises to the plastid. Its subcellular location is the chloroplast. This is Large ribosomal subunit protein uL2cz/uL2cy (rpl2-A) from Barbarea verna (Land cress).